A 74-amino-acid polypeptide reads, in one-letter code: Ubiquitin-like protein FUBI (74 aa).

The protein belongs to the ubiquitin family.

The sequence is that of Ubiquitin-like protein FUBI (Fau) from Mus spicilegus (Steppe mouse).